Here is a 339-residue protein sequence, read N- to C-terminus: Glycerol-3-phosphate dehydrogenase [NAD(P)+] (339 aa).

NADPH-binding residues include Ser11, Trp12, and Lys109. 3 residues coordinate sn-glycerol 3-phosphate: Lys109, Gly140, and Ser142. An NADPH-binding site is contributed by Ala144. Sn-glycerol 3-phosphate contacts are provided by Lys195, Asp249, Ser259, Arg260, and Asn261. Lys195 acts as the Proton acceptor in catalysis. Arg260 serves as a coordination point for NADPH. Positions 284 and 286 each coordinate NADPH.

This sequence belongs to the NAD-dependent glycerol-3-phosphate dehydrogenase family.

The protein resides in the cytoplasm. The enzyme catalyses sn-glycerol 3-phosphate + NAD(+) = dihydroxyacetone phosphate + NADH + H(+). It carries out the reaction sn-glycerol 3-phosphate + NADP(+) = dihydroxyacetone phosphate + NADPH + H(+). It participates in membrane lipid metabolism; glycerophospholipid metabolism. Catalyzes the reduction of the glycolytic intermediate dihydroxyacetone phosphate (DHAP) to sn-glycerol 3-phosphate (G3P), the key precursor for phospholipid synthesis. This is Glycerol-3-phosphate dehydrogenase [NAD(P)+] from Lactobacillus helveticus (strain DPC 4571).